The primary structure comprises 147 residues: 3-dehydroquinate dehydratase (147 aa).

Tyr-23 acts as the Proton acceptor in catalysis. The substrate site is built by Asn-74, His-80, and Asp-87. The active-site Proton donor is His-100. Substrate-binding positions include 101–102 and Arg-111; that span reads IS.

The protein belongs to the type-II 3-dehydroquinase family. In terms of assembly, homododecamer.

It carries out the reaction 3-dehydroquinate = 3-dehydroshikimate + H2O. It functions in the pathway metabolic intermediate biosynthesis; chorismate biosynthesis; chorismate from D-erythrose 4-phosphate and phosphoenolpyruvate: step 3/7. Functionally, catalyzes a trans-dehydration via an enolate intermediate. The protein is 3-dehydroquinate dehydratase of Prochlorococcus marinus (strain MIT 9301).